A 139-amino-acid chain; its full sequence is Thioredoxin-like protein Clot (139 aa).

One can recognise a Thioredoxin domain in the interval 1-136; the sequence is MTVEKVDATV…LADKVDAVVN (136 aa). Residues Cys49 and Cys52 each act as nucleophile in the active site. Cys49 and Cys52 are disulfide-bonded.

The protein belongs to the thioredoxin family.

In terms of biological role, probable thiol-disulfide oxidoreductase that may participate in various redox reactions. The chain is Thioredoxin-like protein Clot from Oryza sativa subsp. japonica (Rice).